We begin with the raw amino-acid sequence, 316 residues long: 4-hydroxy-3-methylbut-2-enyl diphosphate reductase (316 aa).

Cys12 serves as a coordination point for [4Fe-4S] cluster. (2E)-4-hydroxy-3-methylbut-2-enyl diphosphate is bound by residues His43 and His81. 2 residues coordinate dimethylallyl diphosphate: His43 and His81. The isopentenyl diphosphate site is built by His43 and His81. Cys103 provides a ligand contact to [4Fe-4S] cluster. A (2E)-4-hydroxy-3-methylbut-2-enyl diphosphate-binding site is contributed by His131. Position 131 (His131) interacts with dimethylallyl diphosphate. His131 lines the isopentenyl diphosphate pocket. Glu133 serves as the catalytic Proton donor. Thr170 serves as a coordination point for (2E)-4-hydroxy-3-methylbut-2-enyl diphosphate. Cys198 contributes to the [4Fe-4S] cluster binding site. (2E)-4-hydroxy-3-methylbut-2-enyl diphosphate-binding residues include Ser226, Asn228, and Ser271. The dimethylallyl diphosphate site is built by Ser226, Asn228, and Ser271. Positions 226, 228, and 271 each coordinate isopentenyl diphosphate.

Belongs to the IspH family. Requires [4Fe-4S] cluster as cofactor.

It carries out the reaction isopentenyl diphosphate + 2 oxidized [2Fe-2S]-[ferredoxin] + H2O = (2E)-4-hydroxy-3-methylbut-2-enyl diphosphate + 2 reduced [2Fe-2S]-[ferredoxin] + 2 H(+). The catalysed reaction is dimethylallyl diphosphate + 2 oxidized [2Fe-2S]-[ferredoxin] + H2O = (2E)-4-hydroxy-3-methylbut-2-enyl diphosphate + 2 reduced [2Fe-2S]-[ferredoxin] + 2 H(+). Its pathway is isoprenoid biosynthesis; dimethylallyl diphosphate biosynthesis; dimethylallyl diphosphate from (2E)-4-hydroxy-3-methylbutenyl diphosphate: step 1/1. The protein operates within isoprenoid biosynthesis; isopentenyl diphosphate biosynthesis via DXP pathway; isopentenyl diphosphate from 1-deoxy-D-xylulose 5-phosphate: step 6/6. In terms of biological role, catalyzes the conversion of 1-hydroxy-2-methyl-2-(E)-butenyl 4-diphosphate (HMBPP) into a mixture of isopentenyl diphosphate (IPP) and dimethylallyl diphosphate (DMAPP). Acts in the terminal step of the DOXP/MEP pathway for isoprenoid precursor biosynthesis. This chain is 4-hydroxy-3-methylbut-2-enyl diphosphate reductase, found in Bacillus anthracis (strain A0248).